A 361-amino-acid polypeptide reads, in one-letter code: Deoxyribonuclease (361 aa).

A signal peptide spans 1–24 (MMHLLRRGAFAILLIVLLPSAALA). His-149 is an active-site residue.

This sequence belongs to the DNase I family. Mg(2+) is required as a cofactor. Requires Ca(2+) as cofactor.

It is found in the secreted. DNA nuclease able to digest short and long DNA substrate. Is resistant to ionic strength and thus active at high salt concentration. The sequence is that of Deoxyribonuclease from Thioalkalivibrio sp. (strain K90mix).